Reading from the N-terminus, the 324-residue chain is Lipoyl synthase, chloroplastic (324 aa).

2 stretches are compositionally biased toward low complexity: residues 1 to 12 and 20 to 29; these read MCGPTATTVANA and KGLPPGLKKP. The tract at residues 1-30 is disordered; it reads MCGPTATTVANAGTGGETIKGLPPGLKKPP. [4Fe-4S] cluster is bound by residues Cys-58, Cys-63, Cys-69, Cys-86, Cys-90, Cys-93, and Ser-302. Residues 72–291 form the Radical SAM core domain; the sequence is GDTGTATVML…AYGEEVIGFR (220 aa).

It belongs to the radical SAM superfamily. Lipoyl synthase family. The cofactor is [4Fe-4S] cluster.

It localises to the plastid. It is found in the chloroplast. It catalyses the reaction [[Fe-S] cluster scaffold protein carrying a second [4Fe-4S](2+) cluster] + N(6)-octanoyl-L-lysyl-[protein] + 2 oxidized [2Fe-2S]-[ferredoxin] + 2 S-adenosyl-L-methionine + 4 H(+) = [[Fe-S] cluster scaffold protein] + N(6)-[(R)-dihydrolipoyl]-L-lysyl-[protein] + 4 Fe(3+) + 2 hydrogen sulfide + 2 5'-deoxyadenosine + 2 L-methionine + 2 reduced [2Fe-2S]-[ferredoxin]. It participates in protein modification; protein lipoylation via endogenous pathway; protein N(6)-(lipoyl)lysine from octanoyl-[acyl-carrier-protein]: step 2/2. Functionally, catalyzes the radical-mediated insertion of two sulfur atoms into the C-6 and C-8 positions of the octanoyl moiety bound to the lipoyl domains of lipoate-dependent enzymes, thereby converting the octanoylated domains into lipoylated derivatives. This Ostreococcus lucimarinus (strain CCE9901) protein is Lipoyl synthase, chloroplastic.